We begin with the raw amino-acid sequence, 384 residues long: CDP-diacylglycerol--serine O-phosphatidyltransferase (384 aa).

The protein belongs to the CDP-alcohol phosphatidyltransferase class-I family.

It is found in the membrane. The catalysed reaction is a CDP-1,2-diacyl-sn-glycerol + L-serine = a 1,2-diacyl-sn-glycero-3-phospho-L-serine + CMP + H(+). The protein operates within phospholipid metabolism; phosphatidylethanolamine biosynthesis; phosphatidylethanolamine from CDP-diacylglycerol: step 1/2. In Encephalitozoon cuniculi (strain GB-M1) (Microsporidian parasite), this protein is CDP-diacylglycerol--serine O-phosphatidyltransferase (PSS).